A 49-amino-acid chain; its full sequence is Delta-actitoxin-Axm1h (49 aa).

3 disulfide bridges follow: C4/C46, C6/C36, and C29/C47.

Belongs to the sea anemone sodium channel inhibitory toxin family. Type I subfamily.

It is found in the secreted. The protein resides in the nematocyst. Functionally, binds specifically to voltage-gated sodium channels (Nav) (site 3), thereby delaying their inactivation during signal transduction. Thus it may strongly stimulate mammalian cardiac muscle contraction. The chain is Delta-actitoxin-Axm1h from Anthopleura xanthogrammica (Giant green sea anemone).